The chain runs to 412 residues: Gamma-glutamyl phosphate reductase (412 aa).

The protein belongs to the gamma-glutamyl phosphate reductase family.

The protein localises to the cytoplasm. It carries out the reaction L-glutamate 5-semialdehyde + phosphate + NADP(+) = L-glutamyl 5-phosphate + NADPH + H(+). It functions in the pathway amino-acid biosynthesis; L-proline biosynthesis; L-glutamate 5-semialdehyde from L-glutamate: step 2/2. Catalyzes the NADPH-dependent reduction of L-glutamate 5-phosphate into L-glutamate 5-semialdehyde and phosphate. The product spontaneously undergoes cyclization to form 1-pyrroline-5-carboxylate. This is Gamma-glutamyl phosphate reductase from Actinobacillus pleuropneumoniae serotype 3 (strain JL03).